The chain runs to 375 residues: Succinyl-diaminopimelate desuccinylase (375 aa).

Zn(2+) is bound at residue His-66. The active site involves Asp-68. A Zn(2+)-binding site is contributed by Asp-99. Catalysis depends on Glu-133, which acts as the Proton acceptor. The Zn(2+) site is built by Glu-134, Glu-162, and His-348.

The protein belongs to the peptidase M20A family. DapE subfamily. Homodimer. Zn(2+) serves as cofactor. Requires Co(2+) as cofactor.

The enzyme catalyses N-succinyl-(2S,6S)-2,6-diaminopimelate + H2O = (2S,6S)-2,6-diaminopimelate + succinate. The protein operates within amino-acid biosynthesis; L-lysine biosynthesis via DAP pathway; LL-2,6-diaminopimelate from (S)-tetrahydrodipicolinate (succinylase route): step 3/3. Its function is as follows. Catalyzes the hydrolysis of N-succinyl-L,L-diaminopimelic acid (SDAP), forming succinate and LL-2,6-diaminopimelate (DAP), an intermediate involved in the bacterial biosynthesis of lysine and meso-diaminopimelic acid, an essential component of bacterial cell walls. This chain is Succinyl-diaminopimelate desuccinylase, found in Escherichia coli O139:H28 (strain E24377A / ETEC).